A 459-amino-acid polypeptide reads, in one-letter code: MLEFDTITAIATVLGEGGISIIRISGENSLSIANSIFRGKNHRDLLDIKPYSMRYGFIIEKDTGEILDEVLVSFMKGPKSYTAEDIVEINCHGGVLATRKVMEEVIKAGARLAEPGEFTKRAFLNGRIDLSQAEAVIDIIRAKSHISVKSAVQQSQGKISKEINLLREELLEIIAHIEATVNYPEEDLEEMTSDQIYLKINKILDEINYILSNAEEGKIVREGLSVVIVGKPNVGKSSLLNSLIEENKAIVTDIPGTTRDVIEEYMNIGGIPIKIVDTAGIRKTDDIVEKIGVEKSKEKIDESDLVILMLDSSKELDEEDKEIINYVNHRKYIILLNKTDIGDKIDLNDICNLNSRFIIKTSIKNGEGLDKIKNCIKELFFKGEIKSEDLFITNTRHKEGLIRAKESCIEALQTLKSTLSIDLVSIDIKNAWINLGKITGDTLEEDIIDKIFSQFCLGK.

(6S)-5-formyl-5,6,7,8-tetrahydrofolate-binding residues include arginine 23, glutamate 88, and arginine 127. Residues glycine 223–phenylalanine 381 form the TrmE-type G domain. Residue asparagine 233 participates in K(+) binding. Residues asparagine 233–serine 238, threonine 252–threonine 258, and aspartate 277–glycine 280 each bind GTP. A Mg(2+)-binding site is contributed by serine 237. Residues threonine 252, isoleucine 254, and threonine 257 each coordinate K(+). Residue threonine 258 coordinates Mg(2+). Lysine 459 contacts (6S)-5-formyl-5,6,7,8-tetrahydrofolate.

The protein belongs to the TRAFAC class TrmE-Era-EngA-EngB-Septin-like GTPase superfamily. TrmE GTPase family. Homodimer. Heterotetramer of two MnmE and two MnmG subunits. K(+) is required as a cofactor.

The protein resides in the cytoplasm. Exhibits a very high intrinsic GTPase hydrolysis rate. Involved in the addition of a carboxymethylaminomethyl (cmnm) group at the wobble position (U34) of certain tRNAs, forming tRNA-cmnm(5)s(2)U34. This is tRNA modification GTPase MnmE from Clostridium kluyveri (strain ATCC 8527 / DSM 555 / NBRC 12016 / NCIMB 10680 / K1).